The primary structure comprises 307 residues: MTITNGKVSLKHLVTMETLSNEEVLGLIQRGIAFKRGEKVELDRKYYASNLFFEDSTRTHKSFEMAELRLDMGMIDFDARTSSVNKGETLCDTILTMSALGVDICVIRHSEVDYYKQLIDSPTIQTSIVNGGDGSGQHPSQSLLDLMTIYEEFGTFDGLKIAIAGDITHSRVAKSNMQILKRLGAEIFFAGPEEWYAEEFDVYGQHLNIDDIVETVDVLMLLRVQHERHDGDGGFSKETYNRLHGLTEERYKRLKDTAIVMHPAPVNRDVEIDDSLVEAPKSRIVRQMQNGVFVRMAILEAIVNGKA.

Carbamoyl phosphate contacts are provided by R58 and T59. K86 provides a ligand contact to L-aspartate. The carbamoyl phosphate site is built by R108, H138, and Q141. Positions 171 and 223 each coordinate L-aspartate. A264 and P265 together coordinate carbamoyl phosphate.

This sequence belongs to the aspartate/ornithine carbamoyltransferase superfamily. ATCase family. In terms of assembly, heterododecamer (2C3:3R2) of six catalytic PyrB chains organized as two trimers (C3), and six regulatory PyrI chains organized as three dimers (R2).

It catalyses the reaction carbamoyl phosphate + L-aspartate = N-carbamoyl-L-aspartate + phosphate + H(+). The protein operates within pyrimidine metabolism; UMP biosynthesis via de novo pathway; (S)-dihydroorotate from bicarbonate: step 2/3. Catalyzes the condensation of carbamoyl phosphate and aspartate to form carbamoyl aspartate and inorganic phosphate, the committed step in the de novo pyrimidine nucleotide biosynthesis pathway. This chain is Aspartate carbamoyltransferase catalytic subunit, found in Streptococcus suis (strain 98HAH33).